The following is a 419-amino-acid chain: Hyaluronan synthase (419 aa).

The next 5 membrane-spanning stretches (helical) occupy residues 8 to 28 (LIVL…MYLF), 33 to 53 (VGIY…LSFL), 318 to 338 (IVAL…VAIG), 345 to 365 (AIQL…IVAL), and 376 to 396 (PASF…LQPL).

The protein belongs to the NodC/HAS family. The cofactor is Mg(2+).

The protein resides in the cell membrane. It catalyses the reaction [hyaluronan](n) + UDP-N-acetyl-alpha-D-glucosamine = N-acetyl-beta-D-glucosaminyl-(1-&gt;4)-[hyaluronan](n) + UDP + H(+). The enzyme catalyses N-acetyl-beta-D-glucosaminyl-(1-&gt;4)-[hyaluronan](n) + UDP-alpha-D-glucuronate = [hyaluronan](n+1) + UDP + H(+). It participates in glycan biosynthesis; hyaluronan biosynthesis. In terms of biological role, glycosaminoglycan synthesis. The hyaluronic acid capsule is involved in the pathogenicity of group A Streptococci; it may be the major virulence determinant. In Streptococcus pyogenes serotype M1, this protein is Hyaluronan synthase (hasA).